The following is a 467-amino-acid chain: Probable tryptophanase (467 aa).

Lysine 263 carries the post-translational modification N6-(pyridoxal phosphate)lysine.

The protein belongs to the beta-eliminating lyase family. Pyridoxal 5'-phosphate serves as cofactor.

The catalysed reaction is L-tryptophan + H2O = indole + pyruvate + NH4(+). It participates in amino-acid degradation; L-tryptophan degradation via pyruvate pathway; indole and pyruvate from L-tryptophan: step 1/1. This is Probable tryptophanase (tnaA) from Aeropyrum pernix (strain ATCC 700893 / DSM 11879 / JCM 9820 / NBRC 100138 / K1).